Reading from the N-terminus, the 116-residue chain is UPF0342 protein CTC_01059 (116 aa).

Belongs to the UPF0342 family.

This chain is UPF0342 protein CTC_01059, found in Clostridium tetani (strain Massachusetts / E88).